The primary structure comprises 413 residues: Replication factor C large subunit (413 aa).

ATP is bound at residue 54–61 (GPPGSGKT).

The protein belongs to the activator 1 small subunits family. RfcL subfamily. As to quaternary structure, heteromultimer composed of small subunits (RfcS) and large subunits (RfcL).

In terms of biological role, part of the RFC clamp loader complex which loads the PCNA sliding clamp onto DNA. The protein is Replication factor C large subunit of Thermofilum pendens (strain DSM 2475 / Hrk 5).